The primary structure comprises 410 residues: Dipeptidase ataJ (410 aa).

Residues H27, D29, and E138 each coordinate Zn(2+). H165 lines the substrate pocket. The disordered stretch occupies residues 180–200 (TSSPWSEYGGQTHDPGDEPSR). Substrate-binding residues include R258 and D318.

This sequence belongs to the metallo-dependent hydrolases superfamily. Peptidase M19 family. The cofactor is Zn(2+).

It carries out the reaction an L-aminoacyl-L-amino acid + H2O = 2 an L-alpha-amino acid. Its pathway is mycotoxin biosynthesis. Dipeptidase; part of the gene cluster that mediates the biosynthesis of acetylaranotin, a member of the epipolythiodioxopiperazine (ETP) class of toxins characterized by a disulfide-bridged cyclic dipeptide. The first step of acetylaranotin biosynthesis is performed by the NRPS ataP which produces diketopiperazine cyclo-L-Phe-L-Phe via the condensation of 2 phenylalanines (L-Phe). The ataC domain of ataTC then catalyzes the formation of bishydroxylation of cyclo-L-Phe-L-Phe. The glutathione S-transferase domain ataG in ataIMG further catalyzes the conjugation of two glutathiones to the bishydroxylated intermediate. Next, the dipeptidase ataJ removes the Glu residues. The following step is performed by the carbon sulfur lyase domain ataI of ataIMG which may convert the bis-cysteinyl adduct to yield an epidithiol intermediate. The ataT domain from ataTC then catalyzes the oxidation of the free dithiols, followed by a cyclization step catalyzed by the cytochrome P450 ataF. AtaF probably acts as an epoxidase to promote a dual epoxidation formation at C8 and C9 along with C8' and C9', followed by the spontaneous nucleophilic attack of the amide nitrogens N10 and N10' to yield an intermediate with the pyrrolidine partial structure. The final steps of acetylaranotin biosynthesis involve the acetylation and ring rearrangement of an epitetrathiodiketopiperazine intermediate to produce acetylaranotin. AtaH probably catalyzes the acetylation of epitetrathiodiketopiperazine to produce a diacetate and ataY is responsible for the formation of the dihydrooxepin moiety that converts the diacetate intermediate to acetylaranotin via acetylapoaranotin. Both enzymes could function independently in the absence of the other. The acetylaranotin bis-thiomethyltransferase ataS located outside of acetylaranotin gene cluster is the main thiomethyltransferase responsible for converting acetylaranotin and its related intermediates to their methylated forms. In Aspergillus terreus (strain NIH 2624 / FGSC A1156), this protein is Dipeptidase ataJ.